The following is a 209-amino-acid chain: Large ribosomal subunit protein uL4 (209 aa).

Positions S50–I78 are disordered.

The protein belongs to the universal ribosomal protein uL4 family. In terms of assembly, part of the 50S ribosomal subunit.

In terms of biological role, one of the primary rRNA binding proteins, this protein initially binds near the 5'-end of the 23S rRNA. It is important during the early stages of 50S assembly. It makes multiple contacts with different domains of the 23S rRNA in the assembled 50S subunit and ribosome. Forms part of the polypeptide exit tunnel. The polypeptide is Large ribosomal subunit protein uL4 (Mycoplasmoides gallisepticum (strain R(low / passage 15 / clone 2)) (Mycoplasma gallisepticum)).